The sequence spans 325 residues: Beta-ketoacyl-[acyl-carrier-protein] synthase III (325 aa).

Catalysis depends on residues cysteine 119 and histidine 252. The ACP-binding stretch occupies residues glutamine 253–arginine 257. The active site involves asparagine 282.

It belongs to the thiolase-like superfamily. FabH family. In terms of assembly, homodimer.

The protein localises to the cytoplasm. The catalysed reaction is malonyl-[ACP] + acetyl-CoA + H(+) = 3-oxobutanoyl-[ACP] + CO2 + CoA. Its pathway is lipid metabolism; fatty acid biosynthesis. In terms of biological role, catalyzes the condensation reaction of fatty acid synthesis by the addition to an acyl acceptor of two carbons from malonyl-ACP. Catalyzes the first condensation reaction which initiates fatty acid synthesis and may therefore play a role in governing the total rate of fatty acid production. Possesses both acetoacetyl-ACP synthase and acetyl transacylase activities. Its substrate specificity determines the biosynthesis of branched-chain and/or straight-chain of fatty acids. This chain is Beta-ketoacyl-[acyl-carrier-protein] synthase III, found in Acidovorax ebreus (strain TPSY) (Diaphorobacter sp. (strain TPSY)).